Reading from the N-terminus, the 292-residue chain is Glycine--tRNA ligase alpha subunit (292 aa).

This sequence belongs to the class-II aminoacyl-tRNA synthetase family. As to quaternary structure, tetramer of two alpha and two beta subunits.

Its subcellular location is the cytoplasm. It carries out the reaction tRNA(Gly) + glycine + ATP = glycyl-tRNA(Gly) + AMP + diphosphate. This chain is Glycine--tRNA ligase alpha subunit, found in Pelobacter propionicus (strain DSM 2379 / NBRC 103807 / OttBd1).